The following is a 466-amino-acid chain: Cysteine--tRNA ligase (466 aa).

Cys30 is a binding site for Zn(2+). Positions 32 to 42 (PTVYNYIHIGN) match the 'HIGH' region motif. Zn(2+)-binding residues include Cys210, His235, and Glu239. Residues 267 to 271 (KMSKS) carry the 'KMSKS' region motif. ATP is bound at residue Lys270. Ser271 is modified (phosphoserine).

This sequence belongs to the class-I aminoacyl-tRNA synthetase family. Monomer. The cofactor is Zn(2+).

It is found in the cytoplasm. It catalyses the reaction tRNA(Cys) + L-cysteine + ATP = L-cysteinyl-tRNA(Cys) + AMP + diphosphate. This is Cysteine--tRNA ligase from Geobacillus sp. (strain WCH70).